A 534-amino-acid polypeptide reads, in one-letter code: Apolipoprotein N-acyltransferase (534 aa).

Helical transmembrane passes span 8-28 (VILV…AFAV), 31-51 (LPPF…VWLI), 69-89 (AFAV…WWLG), 105-125 (LAIL…VALA), 127-147 (IFWS…GLME), 178-198 (VIGA…PALF), and 208-228 (VALA…ALYL). The CN hydrolase domain occupies 246-496 (VQPDIDQAAK…TGFIDATVDS (251 aa)). Glu291 functions as the Proton acceptor in the catalytic mechanism. Lys355 is an active-site residue. Cys408 serves as the catalytic Nucleophile. A helical transmembrane segment spans residues 511 to 531 (FWLTEALLILIALISREGFIF).

The protein belongs to the CN hydrolase family. Apolipoprotein N-acyltransferase subfamily.

The protein localises to the cell inner membrane. The enzyme catalyses N-terminal S-1,2-diacyl-sn-glyceryl-L-cysteinyl-[lipoprotein] + a glycerophospholipid = N-acyl-S-1,2-diacyl-sn-glyceryl-L-cysteinyl-[lipoprotein] + a 2-acyl-sn-glycero-3-phospholipid + H(+). Its pathway is protein modification; lipoprotein biosynthesis (N-acyl transfer). In terms of biological role, catalyzes the phospholipid dependent N-acylation of the N-terminal cysteine of apolipoprotein, the last step in lipoprotein maturation. The polypeptide is Apolipoprotein N-acyltransferase (Rhizobium etli (strain CIAT 652)).